We begin with the raw amino-acid sequence, 85 residues long: SAPANAVSADDATAIALKYNQDATKSERVSAARPGLPPEEQHCANCQFMQADAAGATDEWKGCQLFPGKLINVNGWCASWTLKAG.

[4Fe-4S] cluster contacts are provided by cysteine 43, cysteine 46, cysteine 63, and cysteine 77.

Belongs to the high-potential iron-sulfur protein (HiPIP) family. In terms of assembly, homodimer.

It localises to the periplasm. Its function is as follows. Specific class of high-redox-potential 4Fe-4S ferredoxins. Functions in anaerobic electron transport in most purple and in some other photosynthetic bacteria and in at least one genus (Paracoccus) of halophilic, denitrifying bacteria. This chain is High-potential iron-sulfur protein, found in Allochromatium warmingii (Chromatium warmingii).